The sequence spans 312 residues: MERVNETVVREVIFLGFSSLARLQQLLFVIFLLLYLFTLGTNAIIISTIVLDRALHIPMYFFLAILSCSEICYTFIIVPKMLVDLLSQKKTISFLGCAIQMFSFLFLGCSHSFLLAVMGYDRYIAICNPLRYSVLMGHGVCMGLVAAACACGFTVAQIITSLVFHLPFYSSNQLHHFFCDIAPVLKLASHHNHFSQIVIFMLCTLVLAIPLLLILVSYVHILSAILQFPSTLGRCKAFSTCVSHLIIVTVHYGCASFIYLRPQSNYSSSQDALISVSYTIITPLFNPMIYSLRNKEFKSALCKIVRRTISLL.

Topologically, residues methionine 1–glutamine 25 are extracellular. Asparagine 5 carries N-linked (GlcNAc...) asparagine glycosylation. A helical transmembrane segment spans residues leucine 26–isoleucine 46. Topologically, residues serine 47 to alanine 54 are cytoplasmic. Residues leucine 55 to phenylalanine 75 traverse the membrane as a helical segment. Residues isoleucine 76 to isoleucine 99 are Extracellular-facing. The helical transmembrane segment at glutamine 100–tyrosine 120 threads the bilayer. The Cytoplasmic portion of the chain corresponds to aspartate 121–glycine 139. A helical membrane pass occupies residues valine 140–threonine 160. The Extracellular segment spans residues serine 161–isoleucine 197. Residues valine 198 to serine 217 form a helical membrane-spanning segment. Topologically, residues tyrosine 218–alanine 237 are cytoplasmic. Residues phenylalanine 238–isoleucine 258 traverse the membrane as a helical segment. Residues tyrosine 259–aspartate 271 lie on the Extracellular side of the membrane. Residue asparagine 265 is glycosylated (N-linked (GlcNAc...) asparagine). The chain crosses the membrane as a helical span at residues alanine 272 to leucine 292. The Cytoplasmic portion of the chain corresponds to arginine 293 to leucine 312.

Belongs to the G-protein coupled receptor 1 family.

Its subcellular location is the cell membrane. In terms of biological role, odorant receptor. The protein is Olfactory receptor 10K2 (OR10K2) of Homo sapiens (Human).